Consider the following 642-residue polypeptide: Regulator of MON1-CCZ1 complex (642 aa).

In terms of domain architecture, Mic1 spans 462 to 616 (RPYTESILML…KLYETLSFPK (155 aa)).

The protein belongs to the RMC1 family. Component of the Mon1-Ccz1 guanyl-nucleotide exchange factor complex made up of Mon1, Ccz1 and Bulli; the interaction of Bulli with the Mon1-Ccz1 heterodimer is mediated via the C-terminal Mic1 domain of Bulli. Mon1 and Ccz1 form a stable complex which displays Rab7 GEF activity with or without Bulli; GEF activity is enhanced by Bulli possibly by improving membrane association of the complex.

It is found in the late endosome. Its function is as follows. Positive regulator of the Rab7 guanyl-nucleotide exchange activity of the Mon1-Ccz1 complex, possibly by enhancing its endosomal membrane association. As part of the Mon1-Ccz1 complex involved in endolysosomal biogenesis possibly by mediating Rab conversion, the replacement of Rab5 with Rab7 during late endosome maturation. This chain is Regulator of MON1-CCZ1 complex, found in Drosophila melanogaster (Fruit fly).